The sequence spans 134 residues: Profilin-3 (134 aa).

A disulfide bond links C13 and C118. The short motif at 84–100 (AVIRGKKGSGGITIKKT) is the Involved in PIP2 interaction element. A Phosphothreonine modification is found at T114.

Belongs to the profilin family. Occurs in many kinds of cells as a complex with monomeric actin in a 1:1 ratio. In terms of processing, phosphorylated by MAP kinases.

The protein resides in the cytoplasm. The protein localises to the cytoskeleton. Functionally, binds to actin and affects the structure of the cytoskeleton. At high concentrations, profilin prevents the polymerization of actin, whereas it enhances it at low concentrations. The protein is Profilin-3 of Olea europaea (Common olive).